The primary structure comprises 81 residues: Protein translocase subunit SecE (81 aa).

Residues 50 to 70 (VAVILMVILVSTVIYFVDQIF) traverse the membrane as a helical segment.

The protein belongs to the SecE/SEC61-gamma family. In terms of assembly, component of the Sec protein translocase complex. Heterotrimer consisting of SecY, SecE and SecG subunits. The heterotrimers can form oligomers, although 1 heterotrimer is thought to be able to translocate proteins. Interacts with the ribosome. Interacts with SecDF, and other proteins may be involved. Interacts with SecA.

The protein resides in the cell inner membrane. It localises to the cellular thylakoid membrane. In terms of biological role, essential subunit of the Sec protein translocation channel SecYEG. Clamps together the 2 halves of SecY. May contact the channel plug during translocation. This Synechocystis sp. (strain ATCC 27184 / PCC 6803 / Kazusa) protein is Protein translocase subunit SecE.